Reading from the N-terminus, the 481-residue chain is Cysteine--tRNA ligase (481 aa).

Cys29 contributes to the Zn(2+) binding site. The 'HIGH' region motif lies at 31–41 (PTVYDYSHLGH). Zn(2+) is bound by residues Cys210, His235, and Glu239. The short motif at 272-276 (KMSKS) is the 'KMSKS' region element. Lys275 lines the ATP pocket.

Belongs to the class-I aminoacyl-tRNA synthetase family. As to quaternary structure, monomer. It depends on Zn(2+) as a cofactor.

The protein localises to the cytoplasm. It catalyses the reaction tRNA(Cys) + L-cysteine + ATP = L-cysteinyl-tRNA(Cys) + AMP + diphosphate. This Anaeromyxobacter dehalogenans (strain 2CP-1 / ATCC BAA-258) protein is Cysteine--tRNA ligase.